The sequence spans 323 residues: Peroxisome biogenesis protein 20 (323 aa).

Cys-8 participates in a covalent cross-link: Glycyl cysteine thioester (Cys-Gly) (interchain with G-Cter in ubiquitin). Lys-19 participates in a covalent cross-link: Glycyl lysine isopeptide (Lys-Gly) (interchain with G-Cter in ubiquitin). 3 short sequence motifs (wxxxF/Y motif) span residues 89–93, 102–105, and 141–145; these read WSSEF, WVED, and WTQEF.

The protein belongs to the peroxisomal targeting signal receptor family. As to quaternary structure, interacts (via WxxxF/Y and LVxEF motifs) with PEX14; promoting translocation through the PEX13-PEX14 docking complex. Interacts with PEX7. Monoubiquitinated at Cys-8 by PEX2 during PEX20 passage through the PEX2-PEX10-PEX12 retrotranslocation channel: monoubiquitination acts as a signal for PEX20 extraction and is required for proper export from peroxisomes and recycling. When PEX5 recycling is compromised, polyubiquitinated at Lys-19 by PEX10 during its passage through the retrotranslocation channel, leading to its degradation.

The protein resides in the cytoplasm. It is found in the cytosol. Its subcellular location is the peroxisome matrix. Functionally, coreceptor required for the peroxisomal import of proteins containing a C-terminal PTS2-type peroxisomal targeting signal, such as 3-oxoacyl-CoA thiolase. Acts via its interaction with PEX7, promoting association between PEX7 bound to cargo proteins and the PEX13-PEX14 docking complex. PEX20 along with PEX7 and PTS2-containing cargo proteins are tranlocated into peroxisomes by passing through the PEX13-PEX14 docking complex. PEX20 coreceptor is then retrotranslocated into the cytosol, leading to release of bound cargo in the peroxisome matrix, and reset for a subsequent peroxisome import cycle. Also mediates peroxisomal import of proteins that do not contain PTS1- or PTS2-type peroxisomal targeting signals, such as acyl-CoA oxidases (Aox) izozymes. Import of acyl-CoA oxidases (Aox) izozymes is independent of PEX7. Required for PEX7 ubiquitination. The polypeptide is Peroxisome biogenesis protein 20 (Komagataella pastoris (Yeast)).